The following is a 335-amino-acid chain: Nucleoid-associated protein YejK (335 aa).

This sequence belongs to the YejK family.

Its subcellular location is the cytoplasm. The protein localises to the nucleoid. The polypeptide is Nucleoid-associated protein YejK (Salmonella arizonae (strain ATCC BAA-731 / CDC346-86 / RSK2980)).